Here is a 436-residue protein sequence, read N- to C-terminus: Glutamyl-tRNA reductase (436 aa).

Substrate contacts are provided by residues 49 to 52, serine 109, 114 to 116, and glutamine 120; these read TCNR and EGQ. Cysteine 50 functions as the Nucleophile in the catalytic mechanism. An NADP(+)-binding site is contributed by 198-203; that stretch reads GAGRMS.

This sequence belongs to the glutamyl-tRNA reductase family. As to quaternary structure, homodimer.

The enzyme catalyses (S)-4-amino-5-oxopentanoate + tRNA(Glu) + NADP(+) = L-glutamyl-tRNA(Glu) + NADPH + H(+). It participates in porphyrin-containing compound metabolism; protoporphyrin-IX biosynthesis; 5-aminolevulinate from L-glutamyl-tRNA(Glu): step 1/2. Its pathway is porphyrin-containing compound metabolism; chlorophyll biosynthesis. Functionally, catalyzes the NADPH-dependent reduction of glutamyl-tRNA(Glu) to glutamate 1-semialdehyde (GSA). This Prochlorococcus marinus (strain MIT 9313) protein is Glutamyl-tRNA reductase.